The sequence spans 92 residues: UPF0250 protein CGSHiEE_03170 (92 aa).

The protein belongs to the UPF0250 family.

The chain is UPF0250 protein CGSHiEE_03170 from Haemophilus influenzae (strain PittEE).